The sequence spans 338 residues: Nicotinate-nucleotide--dimethylbenzimidazole phosphoribosyltransferase (338 aa).

Glu306 (proton acceptor) is an active-site residue.

It belongs to the CobT family.

The enzyme catalyses 5,6-dimethylbenzimidazole + nicotinate beta-D-ribonucleotide = alpha-ribazole 5'-phosphate + nicotinate + H(+). Its pathway is nucleoside biosynthesis; alpha-ribazole biosynthesis; alpha-ribazole from 5,6-dimethylbenzimidazole: step 1/2. Catalyzes the synthesis of alpha-ribazole-5'-phosphate from nicotinate mononucleotide (NAMN) and 5,6-dimethylbenzimidazole (DMB). The chain is Nicotinate-nucleotide--dimethylbenzimidazole phosphoribosyltransferase from Cereibacter sphaeroides (strain ATCC 17025 / ATH 2.4.3) (Rhodobacter sphaeroides).